Here is a 323-residue protein sequence, read N- to C-terminus: uncharacterized protein (323 aa).

Belongs to the glycosyltransferase 2 family.

This is an uncharacterized protein from Haemophilus influenzae (strain ATCC 51907 / DSM 11121 / KW20 / Rd).